The chain runs to 519 residues: MAVAAPGQLNLDESPSWGSRSVDCFEKLEQIGEGTYGQVYMARETETQEIVALKKIRMDNEREGFPITAIREIKILKKLHHQNVIQLKEIVTSPGPERDEQGKPIHGNKYKGSIYMVFEYMDHDLTGLADRPGMRFTVPQIKCYMKQLLTGLHYCHINQVLHRDIKGSNLLIDNEGNLKLADFGLARSFSNDHNGNLTNRVITLWYRPPELLLGSTKYGPAVDMWSVGCIFAELLNGKPILPGKNEPEQLSKIFDVCGTPDESNWPGVTKMPWYNNFKPPRQLKRRVKEYFKHFDRLALDLLEKMLTLDPAQRISAQDALDAEYFWSDPLPCDPKSLPKYESSHEFQTKKKRQQMRQADEAAKRQKTQHPQPHGRLPPIQQTGQPHPQIRPGQPMNNPHAPMAAGPGHHYAKPRGPGGSSRYPQGGNQGGGYPNRGGQGGGGSYGNAPYPQQGRGPPPPYPGSGMAGTGGPRGGVGGGYGGGSNYPQQGGPYGPSGPGRGSNYPQQGGSRNQQQYGNWQ.

In terms of domain architecture, Protein kinase spans 25–325; the sequence is FEKLEQIGEG…AQDALDAEYF (301 aa). ATP contacts are provided by residues 31 to 39 and lysine 54; that span reads IGEGTYGQV. The residue at position 35 (threonine 35) is a Phosphothreonine. Position 36 is a phosphotyrosine (tyrosine 36). Residue aspartate 164 is the Proton acceptor of the active site. The residue at position 198 (threonine 198) is a Phosphothreonine. Positions 336–348 are enriched in basic and acidic residues; the sequence is SLPKYESSHEFQT. Positions 336 to 519 are disordered; it reads SLPKYESSHE…RNQQQYGNWQ (184 aa). Over residues 426-444 the composition is skewed to gly residues; it reads GNQGGGYPNRGGQGGGGSY. Over residues 445–454 the composition is skewed to low complexity; that stretch reads GNAPYPQQGR. Composition is skewed to gly residues over residues 464–483 and 490–499; these read GMAGTGGPRGGVGGGYGGGS and GPYGPSGPGR. Positions 505–519 are enriched in polar residues; sequence QQGGSRNQQQYGNWQ.

The protein belongs to the protein kinase superfamily. CMGC Ser/Thr protein kinase family. CDC2/CDKX subfamily.

The catalysed reaction is L-seryl-[protein] + ATP = O-phospho-L-seryl-[protein] + ADP + H(+). It carries out the reaction L-threonyl-[protein] + ATP = O-phospho-L-threonyl-[protein] + ADP + H(+). It catalyses the reaction [DNA-directed RNA polymerase] + ATP = phospho-[DNA-directed RNA polymerase] + ADP + H(+). The chain is Cyclin-dependent kinase C-1 (CDKC-1) from Oryza sativa subsp. japonica (Rice).